The chain runs to 462 residues: Arginine-specific demethylase JMJ20 (462 aa).

The JmjC domain maps to 115 to 287 (VKEYPDYTAY…WVWDLLWKDY (173 aa)). Positions 177, 179, and 255 each coordinate Fe cation.

The protein belongs to the JARID1 histone demethylase family. Fe(2+) is required as a cofactor. Mostly expressed in leaves, and, to a lower extent, in inflorescences, roots, siliques and stems.

It localises to the nucleus. The enzyme catalyses N(omega),N(omega)-dimethyl-L-arginyl-[protein] + 2-oxoglutarate + O2 = N(omega)-methyl-L-arginyl-[protein] + formaldehyde + succinate + CO2. Functionally, histone demethylase that demethylates 'Arg-3' (H4R3me) of histone H4 with a specific activity for H4R3me2. Involved in the positive regulation of gene expression. Together with JMJ22, positively regulates seed germination by promoting the removal of repressive histone arginine methylations (e.g. H4R3me2) at GA3ox1 and GA3ox2 to trigger gibberellic acid (GA) biosynthesis. This chain is Arginine-specific demethylase JMJ20, found in Arabidopsis thaliana (Mouse-ear cress).